A 799-amino-acid polypeptide reads, in one-letter code: 1,4-alpha-glucan-branching enzyme 2, chloroplastic/amyloplastic (799 aa).

The N-terminal 57 residues, 1–57 (MAFRVSGAVLGGAVRAPRLTGGGEGSLVFRHTGLFLTRGARVGCSGTHGAMRAAAAA), are a transit peptide targeting the chloroplast. (1,4-alpha-D-glucosyl)n-binding residues include Trp-196 and Lys-232. The active-site Nucleophile is the Asp-447. Glu-502 serves as the catalytic Proton donor.

The protein belongs to the glycosyl hydrolase 13 family. GlgB subfamily. In terms of assembly, monomer.

The protein resides in the plastid. Its subcellular location is the chloroplast. The protein localises to the amyloplast. The catalysed reaction is Transfers a segment of a (1-&gt;4)-alpha-D-glucan chain to a primary hydroxy group in a similar glucan chain.. It participates in glycan biosynthesis; starch biosynthesis. Its function is as follows. Catalyzes the formation of the alpha-1,6-glucosidic linkages in starch by scission of a 1,4-alpha-linked oligosaccharide from growing alpha-1,4-glucan chains and the subsequent attachment of the oligosaccharide to the alpha-1,6 position. The sequence is that of 1,4-alpha-glucan-branching enzyme 2, chloroplastic/amyloplastic (SBE1) from Zea mays (Maize).